The sequence spans 394 residues: MEFIIKSLLDTDLYKFTMMQAVLHQYPGAQVEYRFKCRTPGVDLARFINEISHEIDGLCGLCFSKEELDYLRGLRFMKPDFVDFLGLFHLDRKYLQLRASSQVPGEIELDIRGPWLHTILFEVPLLAIINEVWFRNTSVLNLDVGRDRLDAKVRLLKDESGYEECSIADYGTRRRYSRQWHAELLPLLAQGLGSNFVGTSNVYFAKQYGYTPLGTMAHEYLQAFQALGPRLRDSQVAGLEAWAREYRGDLGIALSDVVGLDAFLGDFDLYFCKLFDGMRHDSGDPFKWGERIIMHLESHRIDPRTKVLVFSDGLDMNKVMRLYQHFRGRCRLAFGVGTSLTNDLGPTPLQIVIKMVRCNGQPVAKLSDSPGKSMCDDPGYLHYLRQVFGVSADV.

A Phosphohistidine; by autocatalysis modification is found at His-218.

This sequence belongs to the NAPRTase family. In terms of processing, transiently phosphorylated on a His residue during the reaction cycle. Phosphorylation strongly increases the affinity for substrates and increases the rate of nicotinate D-ribonucleotide production. Dephosphorylation regenerates the low-affinity form of the enzyme, leading to product release.

The enzyme catalyses nicotinate + 5-phospho-alpha-D-ribose 1-diphosphate + ATP + H2O = nicotinate beta-D-ribonucleotide + ADP + phosphate + diphosphate. The protein operates within cofactor biosynthesis; NAD(+) biosynthesis; nicotinate D-ribonucleotide from nicotinate: step 1/1. Its function is as follows. Catalyzes the synthesis of beta-nicotinate D-ribonucleotide from nicotinate and 5-phospho-D-ribose 1-phosphate at the expense of ATP. In Xylella fastidiosa (strain Temecula1 / ATCC 700964), this protein is Nicotinate phosphoribosyltransferase.